An 818-amino-acid chain; its full sequence is MEGGEEEVERIPDELFDTKKKHLLDKLIRVGIILVLLIWGTVLLLKSIPHHSNTPDYQEPNSNYTNDGKLKVSFSVVRNNTFQPKYHELQWISDNKIESNDLGLYVTFMNDSYVVKSVYDDSYNSVLLEGKTFIHNGQNLTVESITASPDLKRLLIRTNSVQNWRHSTFGSYFVYDKSSSSFEEIGNEVALAIWSPNSNDIAYVQDNNIYIYSAISKKTIRAVTNDGSSFLFNGKPDWVYEEEVFEDDKAAWWSPTGDYLAFLKIDESEVGEFIIPYYVQDEKDIYPEMRSIKYPKSGTPNPHAELWVYSMKDGTSFHPRISGNKKDGSLLITEVTWVGNGNVLVKTTDRSSDILTVFLIDTIAKTSNVVRNESSNGGWWEITHNTLFIPANETFDRPHNGYVDILPIGGYNHLAYFENSNSSHYKTLTEGKWEVVNGPLAFDSMENRLYFISTRKSSTERHVYYIDLRSPNEIIEVTDTSEDGVYDVSFSSGRRFGLLTYKGPKVPYQKIVDFHSRKAEKCDKGNVLGKSLYHLEKNEVLTKILEDYAVPRKSFRELNLGKDEFGKDILVNSYEILPNDFDETLSDHYPVFFFAYGGPNSQQVVKTFSVGFNEVVASQLNAIVVVVDGRGTGFKGQDFRSLVRDRLGDYEARDQISAASLYGSLTFVDPQKISLFGWSYGGYLTLKTLEKDGGRHFKYGMSVAPVTDWRFYDSVYTERYMHTPQENFDGYVESSVHNVTALAQANRFLLMHGTGDDNVHFQNSLKFLDLLDLNGVENYDVHVFPDSDHSIRYHNANVIVFDKLLDWAKRAFDGQFVK.

At 1–29 (MEGGEEEVERIPDELFDTKKKHLLDKLIR) the chain is on the cytoplasmic side. Residues 30–45 (VGIILVLLIWGTVLLL) traverse the membrane as a helical; Signal-anchor for type II membrane protein segment. The Lumenal portion of the chain corresponds to 46 to 818 (KSIPHHSNTP…KRAFDGQFVK (773 aa)). N-linked (GlcNAc...) asparagine glycans are attached at residues Asn63, Asn79, Asn110, Asn139, Asn372, Asn392, and Asn421. Ser679 (charge relay system) is an active-site residue. N-linked (GlcNAc...) asparagine glycosylation is present at Asn738. Residues Asp756 and His789 each act as charge relay system in the active site.

This sequence belongs to the peptidase S9B family.

The protein localises to the vacuole membrane. The chain is Dipeptidyl aminopeptidase B (DAP2) from Saccharomyces cerevisiae (strain ATCC 204508 / S288c) (Baker's yeast).